We begin with the raw amino-acid sequence, 1261 residues long: Pentatricopeptide repeat-containing protein 5, mitochondrial (1261 aa).

15 PPR repeats span residues His-365–Thr-404, Asn-405–Ile-442, Pro-443–Ala-479, Ser-480–Asp-514, Thr-550–Leu-584, His-806–Asn-849, Met-852–Pro-886, Arg-887–Pro-924, Ser-925–Pro-959, Thr-960–Pro-995, Arg-996–Pro-1031, Ser-1032–Ile-1068, Asp-1109–Leu-1143, Asn-1144–Lys-1179, and Glu-1180–Leu-1214. Residues Asn-1225 to Asn-1261 form a disordered region. A compositionally biased stretch (polar residues) spans Leu-1237–Asn-1261.

It is found in the mitochondrion. Its function is as follows. Mitochondrial RNA-binding protein that acts as a general negative regulator of mitochondrial translation. The polypeptide is Pentatricopeptide repeat-containing protein 5, mitochondrial (ppr5) (Schizosaccharomyces pombe (strain 972 / ATCC 24843) (Fission yeast)).